Here is a 180-residue protein sequence, read N- to C-terminus: Stathmin-3 (180 aa).

S-palmitoyl cysteine attachment occurs at residues Cys-22 and Cys-24. In terms of domain architecture, SLD spans Gly-38–Gly-180. Phosphoserine occurs at positions 50, 60, 65, 68, 72, 73, and 81. The segment at Leu-58 to Leu-82 is disordered. The span at Ser-60 to Pro-74 shows a compositional bias: low complexity. The stretch at Lys-76–Ser-179 forms a coiled coil.

The protein belongs to the stathmin family. As to quaternary structure, interacts with STAT3. Interacts with CLU (secreted form); this interaction may act as an important modulator during neuronal differentiation. In terms of processing, N-terminal palmitoylation promotes specific anchoring to the cytosolic leaflet of Golgi membranes and subsequent vesicular trafficking along dendrites and axons. Neuronal Stathmins are substrates for palmitoyltransferases ZDHHC3, ZDHHC7 and ZDHHC15.

Its subcellular location is the golgi apparatus. The protein resides in the cell projection. It localises to the growth cone. It is found in the axon. The protein localises to the cytoplasm. Its subcellular location is the cytosol. Exhibits microtubule-destabilizing activity, which is antagonized by STAT3. This Bos taurus (Bovine) protein is Stathmin-3 (STMN3).